The primary structure comprises 568 residues: 2-succinyl-5-enolpyruvyl-6-hydroxy-3-cyclohexene-1-carboxylate synthase (568 aa).

The protein belongs to the TPP enzyme family. MenD subfamily. As to quaternary structure, homodimer. Mg(2+) is required as a cofactor. Mn(2+) serves as cofactor. The cofactor is thiamine diphosphate.

It catalyses the reaction isochorismate + 2-oxoglutarate + H(+) = 5-enolpyruvoyl-6-hydroxy-2-succinyl-cyclohex-3-ene-1-carboxylate + CO2. The protein operates within quinol/quinone metabolism; 1,4-dihydroxy-2-naphthoate biosynthesis; 1,4-dihydroxy-2-naphthoate from chorismate: step 2/7. Its pathway is quinol/quinone metabolism; menaquinone biosynthesis. In terms of biological role, catalyzes the thiamine diphosphate-dependent decarboxylation of 2-oxoglutarate and the subsequent addition of the resulting succinic semialdehyde-thiamine pyrophosphate anion to isochorismate to yield 2-succinyl-5-enolpyruvyl-6-hydroxy-3-cyclohexene-1-carboxylate (SEPHCHC). The chain is 2-succinyl-5-enolpyruvyl-6-hydroxy-3-cyclohexene-1-carboxylate synthase from Mannheimia succiniciproducens (strain KCTC 0769BP / MBEL55E).